The sequence spans 244 residues: Acetylglutamate kinase (244 aa).

Substrate is bound by residues 40–41 (GG), arginine 62, and asparagine 155.

Belongs to the acetylglutamate kinase family. ArgB subfamily.

The protein localises to the cytoplasm. It catalyses the reaction N-acetyl-L-glutamate + ATP = N-acetyl-L-glutamyl 5-phosphate + ADP. Its pathway is amino-acid biosynthesis; L-arginine biosynthesis; N(2)-acetyl-L-ornithine from L-glutamate: step 2/4. Catalyzes the ATP-dependent phosphorylation of N-acetyl-L-glutamate. In Leuconostoc mesenteroides subsp. mesenteroides (strain ATCC 8293 / DSM 20343 / BCRC 11652 / CCM 1803 / JCM 6124 / NCDO 523 / NBRC 100496 / NCIMB 8023 / NCTC 12954 / NRRL B-1118 / 37Y), this protein is Acetylglutamate kinase.